Reading from the N-terminus, the 163-residue chain is NADH-quinone oxidoreductase subunit I (163 aa).

4Fe-4S ferredoxin-type domains follow at residues 54–84 (LRRYPNGEERCIACKLCEAVCPALAITIESD) and 94–123 (TRYDIDLTKCIFCGFCEEACPVDAVVETPI). Cysteine 64, cysteine 67, cysteine 70, cysteine 74, cysteine 103, cysteine 106, cysteine 109, and cysteine 113 together coordinate [4Fe-4S] cluster.

The protein belongs to the complex I 23 kDa subunit family. NDH-1 is composed of 14 different subunits. Subunits NuoA, H, J, K, L, M, N constitute the membrane sector of the complex. [4Fe-4S] cluster is required as a cofactor.

Its subcellular location is the cell inner membrane. It carries out the reaction a quinone + NADH + 5 H(+)(in) = a quinol + NAD(+) + 4 H(+)(out). Functionally, NDH-1 shuttles electrons from NADH, via FMN and iron-sulfur (Fe-S) centers, to quinones in the respiratory chain. The immediate electron acceptor for the enzyme in this species is believed to be ubiquinone. Couples the redox reaction to proton translocation (for every two electrons transferred, four hydrogen ions are translocated across the cytoplasmic membrane), and thus conserves the redox energy in a proton gradient. This Cupriavidus pinatubonensis (strain JMP 134 / LMG 1197) (Cupriavidus necator (strain JMP 134)) protein is NADH-quinone oxidoreductase subunit I.